A 294-amino-acid polypeptide reads, in one-letter code: tRNA pseudouridine synthase B (294 aa).

Asp40 acts as the Nucleophile in catalysis.

The protein belongs to the pseudouridine synthase TruB family. Type 1 subfamily.

It catalyses the reaction uridine(55) in tRNA = pseudouridine(55) in tRNA. In terms of biological role, responsible for synthesis of pseudouridine from uracil-55 in the psi GC loop of transfer RNAs. The protein is tRNA pseudouridine synthase B of Synechococcus elongatus (strain ATCC 33912 / PCC 7942 / FACHB-805) (Anacystis nidulans R2).